The primary structure comprises 292 residues: Protein LRATD1 (292 aa).

A Phosphoserine modification is found at S38. Positions 133–228 (PATEQPAPAP…CRFGKREFKA (96 aa)) constitute an LRAT domain.

Belongs to the LRATD family.

The protein localises to the cytoplasm. Functionally, may play a role in cell morphology and motility. This Mus musculus (Mouse) protein is Protein LRATD1.